Consider the following 493-residue polypeptide: Leucine-rich repeat-containing protein 14 (493 aa).

An LRR 1; degenerate repeat occupies 111–146; the sequence is KHTLRVLDMTGLLDDGVEQDPGTMSMWDCTAAVART. An LRR 2; degenerate repeat occupies 194-218; the sequence is RLCCRDLRAEDLPMRNTVALLQLLD. Residues 219 to 246 form an LRR 3; degenerate repeat; that stretch reads AGCLRRVDLRFNNLGLRGLSVIIPHVAR. Residues 247–282 form an LRR 4; degenerate repeat; the sequence is FQHLASLRLHYVHGDSRQPSVDGEDNFRYFLAQMGR. 5 LRR repeats span residues 283-307, 308-339, 340-360, 364-391, and 392-416; these read FTCL…LSTL, QSPL…VHLK, KLDL…QGLL, AATL…VLTR, and CASL…LLRD.

This sequence belongs to the PRAME family. LRRC14 subfamily. As to quaternary structure, interacts with IKBKB; disrupts IKBKB-IKBKG interaction preventing I-kappa-B-kinase (IKK) core complex formation and leading to a decrease of IKBKB phosphorylation and NF-kappaB activation. Interacts with CHUK.

The protein resides in the cytoplasm. In terms of biological role, negatively regulates Toll-like receptor-mediated NF-kappa-B signaling by disrupting IKK core complex formation through interaction with IKBKB. The chain is Leucine-rich repeat-containing protein 14 from Bos taurus (Bovine).